A 240-amino-acid chain; its full sequence is Mitochondrial transcription rescue factor 1 (240 aa).

A mitochondrion-targeting transit peptide spans 1–84; sequence MAMASVKLLA…ECIFPFSVRL (84 aa). Residues 95–127 form a disordered region; that stretch reads KKSLQKVDEEDSDEESHHDEMSEQEEELEDDPT. A phosphoserine mark is found at Ser-106 and Ser-116. The span at 116-126 shows a compositional bias: acidic residues; it reads SEQEEELEDDP. Residues 142–217 form the S4 RNA-binding domain; it reads FRYDVVLKTG…LKKVFEEKTE (76 aa).

Monomer. Interacts with POLRMT. Interacts (via S4 domain) with MTRFR (via C-terminus). Associates with mitoribosomal S39 large subunit, peptidyl tRNA and nascent chain.

The protein resides in the mitochondrion matrix. Functionally, mitochondrial RNA-binding protein involved in mitochondrial transcription regulation. Functions as a protective factor to maintain proper mitochondrial RNA level during stress. Acts at the transcription level and its protective function depends on its RNA binding ability. Part of a mitoribosome-associated quality control pathway that prevents aberrant translation by responding to interruptions during elongation. As heterodimer with MTRF, ejects the unfinished nascent chain and peptidyl transfer RNA (tRNA), respectively, from stalled ribosomes. Recruitment of mitoribosome biogenesis factors to these quality control intermediates suggests additional roles for MTRES1 and MTRF during mitoribosome rescue. In Homo sapiens (Human), this protein is Mitochondrial transcription rescue factor 1.